Consider the following 272-residue polypeptide: Leucoagglutinating phytohemagglutinin (272 aa).

Residues 1 to 20 (MASSKFFTVLFLVLLTHANS) form the signal peptide. N32 is a glycosylation site (N-linked (GlcNAc...) (high mannose) asparagine). Residue N80 is glycosylated (N-linked (GlcNAc...) (complex) asparagine).

It belongs to the leguminous lectin family. Homotetramer. Post-translationally, N-glycosylated on Asn-80; contains xylose.

This insecticidal carbohydrate-binding lectin is toxic for the cowpea weevil. The sequence is that of Leucoagglutinating phytohemagglutinin (DLEC2) from Phaseolus vulgaris (Kidney bean).